Reading from the N-terminus, the 311-residue chain is LOB domain-containing protein 10 (311 aa).

The 102-residue stretch at 4–105 (TPCAACKLLR…QDLLTAKEEL (102 aa)) folds into the LOB domain. Residues 264–277 (LQEGQEQTEEGQFL) are compositionally biased toward low complexity. Residues 264–311 (LQEGQEQTEEGQFLMQPMGQENLHDEEEEEELEPPVKWRMSENKEASF) form a disordered region. Residues 287 to 296 (HDEEEEEELE) show a composition bias toward acidic residues. Residues 297–311 (PPVKWRMSENKEASF) show a composition bias toward basic and acidic residues.

Belongs to the LOB domain-containing protein family.

The sequence is that of LOB domain-containing protein 10 (LBD10) from Arabidopsis thaliana (Mouse-ear cress).